The following is a 510-amino-acid chain: Inner membrane protein YeeR (510 aa).

Position 1 (M1) is a topological domain, cytoplasmic. Residues 2–22 traverse the membrane as a helical segment; it reads LQIVGALILLIAGFAILRLLF. Residues 23-30 are Periplasmic-facing; the sequence is RALISTAS. Residues 31–51 form a helical membrane-spanning segment; that stretch reads ALAGLILLCLFGPALLAGYIT. Over 52–61 the chain is Cytoplasmic; it reads ERITRLFHIR. Residues 62–82 form a helical membrane-spanning segment; sequence WLAGVFLTIAGMIISFMWGLD. The Periplasmic segment spans residues 83–94; the sequence is GKHIALEAHTFD. The helical transmembrane segment at 95–115 threads the bilayer; it reads SVKFILTTALAGGLLAVPLQI. Over 116–136 the chain is Cytoplasmic; sequence KNIQQNGITPEDISKEINGYY. A helical membrane pass occupies residues 137–157; it reads CCFYTAFFLMACSACAPLIAL. Residues 158-164 are Periplasmic-facing; it reads QYDISPS. The helical transmembrane segment at 165-185 threads the bilayer; it reads LMWWGGLLYWLAALVTLLWAA. Residues 186 to 510 are Cytoplasmic-facing; that stretch reads SQIQALKKLT…KIREGKVEER (325 aa).

Its subcellular location is the cell inner membrane. This chain is Inner membrane protein YeeR (yeeR), found in Escherichia coli (strain K12).